We begin with the raw amino-acid sequence, 513 residues long: Ribonuclease Y (513 aa).

The chain crosses the membrane as a helical span at residues 6 to 26 (YIIIAVVIIIICVILGLYVVD). The 86-residue stretch at 203–288 (TVHVVNLPND…EMVEKAKKEV (86 aa)) folds into the KH domain. The HD domain maps to 329–422 (VLKHSIEVSH…VQAADAISAA (94 aa)).

The protein belongs to the RNase Y family.

The protein resides in the cell membrane. In terms of biological role, endoribonuclease that initiates mRNA decay. In Clostridium botulinum (strain Loch Maree / Type A3), this protein is Ribonuclease Y.